A 655-amino-acid chain; its full sequence is Methylenetetrahydrofolate reductase (NADPH) (655 aa).

The interval 1–39 is disordered; that stretch reads MVNEPRGNGSPGPRWEGSSSGSESSRTSSRCSTPGLDPE. A phosphoserine mark is found at serine 10, serine 18, serine 19, serine 20, serine 22, serine 24, serine 25, serine 28, and serine 29. The segment covering 11 to 35 has biased composition (low complexity); the sequence is PGPRWEGSSSGSESSRTSSRCSTPG. Position 33 is a phosphothreonine (threonine 33). Glutamate 62 functions as the Proton donor/acceptor in the catalytic mechanism. NAD(+) contacts are provided by residues 62–67 and 93–94; these read EFFPPR and TW. Position 93 is a phosphothreonine (threonine 93). 93-94 contacts FAD; the sequence is TW. Serine 102 is modified (phosphoserine). Residues histidine 126, 156-158, 173-174, tyrosine 196, 200-203, aspartate 209, and lysine 216 each bind FAD; these read RGD, YA, and HPEG. Aspartate 158 is a binding site for substrate. Substrate contacts are provided by glutamine 227, tyrosine 320, and arginine 324. Phosphoserine is present on serine 393. Threonine 450 is subject to Phosphothreonine. S-adenosyl-L-methionine is bound by residues asparagine 455, 460–463, 480–484, threonine 559, and threonine 572; these read AAET and TINSQ.

This sequence belongs to the methylenetetrahydrofolate reductase family. In terms of assembly, homodimer. FAD serves as cofactor. Post-translationally, phosphorylation of an N-terminal serine-rich phosphorylation region increases sensitivity to S-adenosylmethionine and inhibition.

The catalysed reaction is (6S)-5-methyl-5,6,7,8-tetrahydrofolate + NADP(+) = (6R)-5,10-methylene-5,6,7,8-tetrahydrofolate + NADPH + H(+). It participates in one-carbon metabolism; tetrahydrofolate interconversion. Its activity is regulated as follows. Allosterically regulated by S-adenosylmethionine (SAM). Functionally, catalyzes the conversion of 5,10-methylenetetrahydrofolate to 5-methyltetrahydrofolate, a cosubstrate for homocysteine remethylation to methionine. Represents a key regulatory connection between the folate and methionine cycles. The chain is Methylenetetrahydrofolate reductase (NADPH) (MTHFR) from Bos taurus (Bovine).